The sequence spans 408 residues: Chaperonin GroEL (408 aa).

ATP contacts are provided by residues 30–33 (TLGP), K51, and 87–91 (DGTTT).

Belongs to the chaperonin (HSP60) family. Forms a cylinder of 14 subunits composed of two heptameric rings stacked back-to-back. Interacts with the co-chaperonin GroES.

Its subcellular location is the cytoplasm. It catalyses the reaction ATP + H2O + a folded polypeptide = ADP + phosphate + an unfolded polypeptide.. Functionally, together with its co-chaperonin GroES, plays an essential role in assisting protein folding. The GroEL-GroES system forms a nano-cage that allows encapsulation of the non-native substrate proteins and provides a physical environment optimized to promote and accelerate protein folding. This is Chaperonin GroEL from Rickettsia rickettsii.